The chain runs to 186 residues: Ribosome-recycling factor (186 aa).

The protein belongs to the RRF family.

The protein resides in the cytoplasm. Responsible for the release of ribosomes from messenger RNA at the termination of protein biosynthesis. May increase the efficiency of translation by recycling ribosomes from one round of translation to another. The chain is Ribosome-recycling factor from Endomicrobium trichonymphae.